We begin with the raw amino-acid sequence, 65 residues long: Precursor peptide TigB (65 aa).

TIGSVS motif repeat units lie at residues 16-21, 23-28, 33-38, 40-45, 47-52, and 54-59; these read TIGSVS. Residues I17, I24, I34, I41, I48, and I55 each carry the methylcyclopropylglycine modification.

In terms of processing, is subject to maturation by TigE, that catalyzes the formation of methylcyclopropylglycine (mCPG) residues from isoleucine residues residing in the repeating TIGSVS motifs.

Precursor peptide which undergoes post-translational modifications by tailoring enzymes, leading to the mature natural product. This chain is Precursor peptide TigB, found in Paramaledivibacter caminithermalis (strain DSM 15212 / CIP 107654 / DViRD3) (Clostridium caminithermale).